Consider the following 243-residue polypeptide: Transmembrane protein 174 (243 aa).

The next 2 membrane-spanning stretches (helical) occupy residues 40–60 (LLFS…MGWI) and 73–93 (LLGP…VCKF).

Interacts with SLC34A1; regulates SLC34A1 internalization by PTH and FGF23. Kidney specific. Expressed in renal primary proximal tubule cells.

Its subcellular location is the endoplasmic reticulum membrane. It localises to the apical cell membrane. In terms of biological role, regulator of plasma phosphate homeostasis. Decreases serum inorganic phosphate (Pi) uptake by regulating the sodium-phosphate cotransporter SLC34A1 trafficking by PTH and FGF23 in the kidney. The protein is Transmembrane protein 174 (Tmem174) of Mus musculus (Mouse).